The sequence spans 825 residues: Breast cancer anti-estrogen resistance protein 3 homolog (825 aa).

Ala2 is subject to N-acetylalanine. 5 positions are modified to phosphoserine: Ser32, Ser78, Ser83, Ser182, and Ser290. The tract at residues 40–84 (EAYPDVSIHGTLPRKKKGPPPIRSCDSASHMGTLPHSKSPRQSSP) is disordered. The 100-residue stretch at 154 to 253 (WYHGRIPRQV…QSGAIIFQPI (100 aa)) folds into the SH2 domain. The disordered stretch occupies residues 300–320 (DHSLPRGNLLRNKDKSGSQPA). N6-methyllysine is present on Lys334. Phosphoserine occurs at positions 358, 363, and 375. The residue at position 442 (Arg442) is an Omega-N-methylarginine. Ser471 carries the post-translational modification Phosphoserine. Positions 548–818 (DARVIAQHML…TALSRKLEPP (271 aa)) constitute a Ras-GEF domain. The interval 744 to 748 (LATAR) is mediates the interaction with BCAR1/p130CAS.

In terms of assembly, part of a complex comprised of PTPRA, BCAR1, BCAR3 and SRC; the formation of the complex is dependent on integrin mediated-tyrosine phosphorylation of PTPRA. Within the complex, interacts (via SH2 domain) with PTPRA (when phosphorylated on 'Tyr-792'). Interacts (via Ras-GEF domain) with BCAR1. Interacts (via Ras-GEF domain) with NEDD9. Interacts with PTK2/FAK1. Interacts with PTPN1. Interacts (via SH2 domain) with EGFR (when tyrosine-phosphorylated). In terms of processing, phosphorylated on tyrosine residues.

Its subcellular location is the cytoplasm. It is found in the cell junction. The protein localises to the focal adhesion. Acts as an adapter protein downstream of several growth factor receptors to promote cell proliferation, migration, and redistribution of actin fibers. Specifically involved in INS/insulin signaling pathway by mediating MAPK1/ERK2-MAPK3/ERK1 activation and DNA synthesis. Promotes insulin-mediated membrane ruffling. In response to vasoconstrictor peptide EDN1, involved in the activation of RAP1 downstream of PTK2B via interaction with phosphorylated BCAR1. Inhibits cell migration and invasion via regulation of TGFB-mediated matrix digestion, actin filament rearrangement, and inhibition of invadopodia activity. May inhibit TGFB/SMAD signaling, via facilitating BCAR1 and SMAD2 and/or SMAD3 interaction. Regulates EGF-induced DNA synthesis. Required for the maintenance of ocular lens morphology and structural integrity, potentially via regulation of focal adhesion complex signaling. Acts upstream of PTPRA to regulate the localization of BCAR1 and PTPRA to focal adhesions, via regulation of SRC-mediated phosphorylation of PTPRA. Positively regulates integrin-induced tyrosine phosphorylation of BCAR1. Acts as a guanine nucleotide exchange factor (GEF) for small GTPases RALA, RAP1A and RRAS. However, in a contrasting study, lacks GEF activity towards RAP1. The protein is Breast cancer anti-estrogen resistance protein 3 homolog of Rattus norvegicus (Rat).